An 820-amino-acid chain; its full sequence is Protein phosphatase 1 regulatory subunit 29 (820 aa).

Positions 1 to 22 are cleaved as a signal peptide; sequence MLRLGLCAAALLCVCRPGAVRA. Residues 23 to 397 lie on the Extracellular side of the membrane; that stretch reads DCWLIEGDKG…APSTSTTTHY (375 aa). The N-linked (GlcNAc...) asparagine glycan is linked to asparagine 54. LRR repeat units follow at residues 56–77, 80–101, 104–125, 128–149, and 152–173; these read TVHD…SLNR, NLTD…AFLG, SLQV…MLRG, RLQF…AFSE, and SLIS…TFAS. 3 N-linked (GlcNAc...) asparagine glycosylation sites follow: asparagine 80, asparagine 85, and asparagine 117. The region spanning 185-247 is the LRRCT domain; it reads NPFNCECDLF…ITVLQAKCRN (63 aa). 2 N-linked (GlcNAc...) asparagine glycosylation sites follow: asparagine 205 and asparagine 247. A disordered region spans residues 250–294; the sequence is LPARPVSHPTPYSTDAQREPDENSGFNPDEILSVEPPASSTTDAS. The 88-residue stretch at 292–379 folds into the Fibronectin type-III domain; sequence DASAGPAIKL…FNHTCLTFTT (88 aa). The chain crosses the membrane as a helical span at residues 398-418; the sequence is IMTILGCLFGMVIVLGAVYYC. The Cytoplasmic portion of the chain corresponds to 419-820; that stretch reads LRKRRMQEEK…WKGVSAQQKL (402 aa). Disordered regions lie at residues 508-527 and 589-612; these read GAGG…LENG and SATG…SSHH. A phosphoserine mark is found at serine 619, serine 668, and serine 672. A disordered region spans residues 654–677; it reads TGLAKGDSKYIEKGSPLNSPLDRL.

As to quaternary structure, interacts with PPP1CA.

It is found in the membrane. Its function is as follows. Inhibits phosphatase activity of protein phosphatase 1 (PP1) complexes. The protein is Protein phosphatase 1 regulatory subunit 29 (ELFN2) of Homo sapiens (Human).